Consider the following 285-residue polypeptide: Transcription factor E2F6 (285 aa).

Residue Lys9 forms a Glycyl lysine isopeptide (Lys-Gly) (interchain with G-Cter in SUMO2) linkage. The DNA-binding element occupies 50-129 (YVSMRKALKV…SKNHIRWIGS (80 aa)). A DEF box motif is present at residues 95-129 (KLGVRKRRVYDITNVLDGIDLVEKKSKNHIRWIGS). Positions 130–222 (DLSNFGAVPQ…PAPKEDSITV (93 aa)) are dimerization. The segment at 143–164 (LQEELSDLSAMEDALDELIKDC) is leucine-zipper. Residues 173-285 (DDKENERLAY…QSEEVLEVSN (113 aa)) are transcription repression. Residues 240-285 (QGSHSSNKTSDNVGTSSSKSKPLEHPQPEKEENPPQQSEEVLEVSN) form a disordered region. Over residues 241-259 (GSHSSNKTSDNVGTSSSKS) the composition is skewed to polar residues. The span at 260–272 (KPLEHPQPEKEEN) shows a compositional bias: basic and acidic residues.

Belongs to the E2F/DP family. As to quaternary structure, forms heterodimers with DP family members TFDP1 or TFDP2. Component of the DRTF1/E2F transcription factor complex. Part of the E2F6.com-1 complex in G0 phase composed of E2F6, MGA, MAX, TFDP1, CBX3, BAT8, EUHMTASE1, RING1, RNF2, MBLR, L3MBTL2 and YAF2. Component of some MLL1/MLL complex, at least composed of the core components KMT2A/MLL1, ASH2L, HCFC1/HCF1, WDR5 and RBBP5, as well as the facultative components BACC1, CHD8, E2F6, HSP70, INO80C, KANSL1, LAS1L, MAX, MCRS1, MGA, KAT8/MOF, PELP1, PHF20, PRP31, RING2, RUVB1/TIP49A, RUVB2/TIP49B, SENP3, TAF1, TAF4, TAF6, TAF7, TAF9 and TEX10.

It is found in the nucleus. In terms of biological role, inhibitor of E2F-dependent transcription. Binds DNA cooperatively with DP proteins through the E2 recognition site, 5'-TTTC[CG]CGC-3'. Has a preference for the 5'-TTTCCCGC-3' E2F recognition site. E2F6 lacks the transcriptional activation and pocket protein binding domains. Appears to regulate a subset of E2F-dependent genes whose products are required for entry into the cell cycle but not for normal cell cycle progression. Represses expression of some meiosis-specific genes, including SLC25A31/ANT4. May silence expression via the recruitment of a chromatin remodeling complex containing histone H3-K9 methyltransferase activity. Overexpression delays the exit of cells from the S-phase. In Bos taurus (Bovine), this protein is Transcription factor E2F6.